Consider the following 600-residue polypeptide: Glutamine--fructose-6-phosphate aminotransferase [isomerizing] (600 aa).

Cys2 acts as the Nucleophile; for GATase activity in catalysis. A Glutamine amidotransferase type-2 domain is found at 2–217; the sequence is CGIVGYIGQL…DKEMVIVTDK (216 aa). SIS domains are found at residues 283–422 and 452–590; these read ISNA…SRGK and IARE…VDKP. Lys595 functions as the For Fru-6P isomerization activity in the catalytic mechanism.

Homodimer.

The protein resides in the cytoplasm. The catalysed reaction is D-fructose 6-phosphate + L-glutamine = D-glucosamine 6-phosphate + L-glutamate. Functionally, catalyzes the first step in hexosamine metabolism, converting fructose-6P into glucosamine-6P using glutamine as a nitrogen source. The chain is Glutamine--fructose-6-phosphate aminotransferase [isomerizing] from Bacillus licheniformis (strain ATCC 14580 / DSM 13 / JCM 2505 / CCUG 7422 / NBRC 12200 / NCIMB 9375 / NCTC 10341 / NRRL NRS-1264 / Gibson 46).